Consider the following 156-residue polypeptide: Cyanate hydratase (156 aa).

Catalysis depends on residues arginine 96, glutamate 99, and serine 122.

It belongs to the cyanase family.

It catalyses the reaction cyanate + hydrogencarbonate + 3 H(+) = NH4(+) + 2 CO2. Functionally, catalyzes the reaction of cyanate with bicarbonate to produce ammonia and carbon dioxide. This Pseudomonas aeruginosa (strain UCBPP-PA14) protein is Cyanate hydratase.